The chain runs to 1202 residues: Nucleolar protein 6 (1202 aa).

The interval M1–K64 is disordered.

The protein belongs to the NRAP family. As to quaternary structure, part of the small subunit (SSU) processome, composed of more than 70 proteins and the RNA chaperone small nucleolar RNA (snoRNA) U3.

It localises to the nucleus. The protein localises to the nucleolus. It is found in the chromosome. Its function is as follows. Part of the small subunit (SSU) processome, first precursor of the small eukaryotic ribosomal subunit. During the assembly of the SSU processome in the nucleolus, many ribosome biogenesis factors, an RNA chaperone and ribosomal proteins associate with the nascent pre-rRNA and work in concert to generate RNA folding, modifications, rearrangements and cleavage as well as targeted degradation of pre-ribosomal RNA by the RNA exosome. The protein is Nucleolar protein 6 of Drosophila willistoni (Fruit fly).